Here is a 158-residue protein sequence, read N- to C-terminus: Ecotin (158 aa).

The signal sequence occupies residues 1-21 (MRLLPLASVTLLSVLCAQAFA). A disulfide bridge links C67 with C104.

The protein belongs to the protease inhibitor I11 (ecotin) family. As to quaternary structure, homodimer.

The protein localises to the periplasm. Its function is as follows. General inhibitor of family S1 serine proteases. The chain is Ecotin from Pseudomonas fluorescens (strain ATCC BAA-477 / NRRL B-23932 / Pf-5).